Consider the following 352-residue polypeptide: Type II restriction enzyme HaeII (352 aa).

It carries out the reaction Endonucleolytic cleavage of DNA to give specific double-stranded fragments with terminal 5'-phosphates.. Functionally, a P subtype restriction enzyme that recognizes the double-stranded sequence 5'-RGCGCY-3' and cleaves after C-5. The protein is Type II restriction enzyme HaeII (haeIIR) of Haemophilus aegyptius.